A 365-amino-acid polypeptide reads, in one-letter code: Flagellar P-ring protein 2 (365 aa).

A signal peptide spans 1-19 (MKKWIVMASLLLAALPAMS).

This sequence belongs to the FlgI family. In terms of assembly, the basal body constitutes a major portion of the flagellar organelle and consists of four rings (L,P,S, and M) mounted on a central rod.

The protein localises to the periplasm. The protein resides in the bacterial flagellum basal body. Assembles around the rod to form the L-ring and probably protects the motor/basal body from shearing forces during rotation. In Chromobacterium violaceum (strain ATCC 12472 / DSM 30191 / JCM 1249 / CCUG 213 / NBRC 12614 / NCIMB 9131 / NCTC 9757 / MK), this protein is Flagellar P-ring protein 2.